The sequence spans 700 residues: Mitosis inducer protein blt1 (700 aa).

Polar residues-rich tracts occupy residues 1–11 (MSKSAFTSKSQ) and 43–53 (PRSTALPNLSN). 2 disordered regions span residues 1–53 (MSKS…NLSN) and 266–293 (TNNR…SKDQ). The segment covering 273 to 284 (GSDGSNSNFNGG) has biased composition (low complexity). Positions 496–575 (SVALDDHNRQ…LNMLQKLSMQ (80 aa)) form a coiled coil. 2 disordered regions span residues 634–659 (FSSF…RKPS) and 671–700 (SSGS…SSKM). Position 636 is a phosphoserine (Ser636).

Interacts with cdr2, mid1 and sad1.

It is found in the cytoplasm. Its subcellular location is the cytoskeleton. In terms of biological role, at the onset of mitosis, forms a medial ring structure before the arrangement of the medial actin ring. Essential for the central positioning of the division septum before the cell divides. The chain is Mitosis inducer protein blt1 (blt1) from Schizosaccharomyces pombe (strain 972 / ATCC 24843) (Fission yeast).